A 384-amino-acid polypeptide reads, in one-letter code: GDSL esterase/lipase At1g71691 (384 aa).

A signal peptide spans 1–27 (MAFHFRRLCFFSALLAVVLQLLHGVSG). The active-site Nucleophile is Ser62. Active-site residues include Asp348 and His351.

This sequence belongs to the 'GDSL' lipolytic enzyme family.

The protein localises to the secreted. This chain is GDSL esterase/lipase At1g71691, found in Arabidopsis thaliana (Mouse-ear cress).